Consider the following 212-residue polypeptide: Thymidylate kinase (212 aa).

An ATP-binding site is contributed by 10–17 (GPDGAGKT).

The protein belongs to the thymidylate kinase family.

The catalysed reaction is dTMP + ATP = dTDP + ADP. Phosphorylation of dTMP to form dTDP in both de novo and salvage pathways of dTTP synthesis. In Enterococcus faecalis (strain ATCC 700802 / V583), this protein is Thymidylate kinase.